A 377-amino-acid chain; its full sequence is Ribosomal RNA large subunit methyltransferase G (377 aa).

Belongs to the methyltransferase superfamily. RlmG family.

The protein localises to the cytoplasm. It catalyses the reaction guanosine(1835) in 23S rRNA + S-adenosyl-L-methionine = N(2)-methylguanosine(1835) in 23S rRNA + S-adenosyl-L-homocysteine + H(+). Functionally, specifically methylates the guanine in position 1835 (m2G1835) of 23S rRNA. This Aeromonas salmonicida (strain A449) protein is Ribosomal RNA large subunit methyltransferase G.